A 423-amino-acid chain; its full sequence is MVFSNNDEGLINKKLPKELLLRIFSFLDIVTLCRCAQISKAWNILALDGSNWQRIDLFNFQTDVEGRVVENISKRCGGFLRKLSLRGCIGVGDSSLKTFAQNCRNIEHLNLNGCTKITDSTCYSLSRFCSKLKHLDLTSCVSITNSSLKGISEGCRHLEYLNLSWCDQITKDGVEALVRGCRGLRALLLRGCTQLEDEALKHIQNYCHELVSLNLQSCSRVTDDGVVQLCRGCPRLQALCLSGCGSLTDASLTALALNCPRLQILEAARCSHLTDAGFTLLARNCHDLEKMDLEECILITDRTLTQLSIHCPKLQALSLSHCELITDDGILHLSNSPCGHERLRVLELDNCLLITDVALEHLEHCRGLERLELYDCQQVTRAGIKRMRAQLPHVRVHAYFAPVTPPTAAGGGGPRLCRCCVIL.

An F-box domain is found at 9 to 55 (GLINKKLPKELLLRIFSFLDIVTLCRCAQISKAWNILALDGSNWQRI). LRR repeat units follow at residues 61–87 (QTDV…SLRG), 88–113 (CIGV…NLNG), 114–139 (CTKI…DLTS), 140–165 (CVSI…NLSW), 166–191 (CDQI…LLRG), 192–217 (CTQL…NLQS), 218–243 (CSRV…CLSG), 244–269 (CGSL…EAAR), 270–295 (CSHL…DLEE), 296–321 (CILI…SLSH), 322–350 (CELI…ELDN), 351–375 (CLLI…ELYD), and 376–401 (CQQV…AYFA). The segment at 80–90 (LRKLSLRGCIG) is interaction with Calmodulin. Residue Lys201 forms a Glycyl lysine isopeptide (Lys-Gly) (interchain with G-Cter in ubiquitin) linkage. Thr404 is modified (phosphothreonine). The S-geranylgeranyl cysteine moiety is linked to residue Cys420. Positions 420 to 423 (CVIL) match the CAAX motif motif.

In terms of assembly, part of the SCF (SKP1-CUL1-F-box) E3 ubiquitin-protein ligase complex SCF(FBXL2) composed of CUL1, SKP1, RBX1 and FBXL2. Interacts with calmodulin; may antagonize substrate ubiquitination by SCF(FBXL2). May interact with PIK3R1. Interacts with PTPN13. Post-translationally, phosphorylated by GSK-beta (GSK3B), promoting recognition by FBXO3, leading to its ubiquitination by the SCF(FBXO3) complex. Ubiquitinated at Lys-201 by the SCF(FBXO3) complex in response to lipopolysaccharide (LPS), leading to its degradation by the proteasome.

The protein localises to the membrane. It participates in protein modification; protein ubiquitination. Its function is as follows. Calcium-activated substrate recognition component of the SCF (SKP1-cullin-F-box protein) E3 ubiquitin-protein ligase complex, SCF(FBXL2), which mediates the ubiquitination and subsequent proteasomal degradation of target proteins. Unlike many F-box proteins, FBXL2 does not seem to target phosphodegron within its substrates but rather calmodulin-binding motifs and is thereby antagonized by calmodulin. This is the case for the cyclins CCND2 and CCND3 which polyubiquitination and subsequent degradation are inhibited by calmodulin. Through CCND2 and CCND3 degradation induces cell-cycle arrest in G(0). SCF(FBXL2) also mediates PIK3R2 ubiquitination and proteasomal degradation thereby regulating phosphatidylinositol 3-kinase signaling and autophagy. PCYT1A monoubiquitination by SCF(FBXL2) and subsequent degradation regulates synthesis of phosphatidylcholine, which is utilized for formation of membranes and of pulmonary surfactant. The SCF(FBXL2) complex acts as a regulator of inflammation by mediating ubiquitination and degradation of TRAF proteins (TRAF1, TRAF2, TRAF3, TRAF4, TRAF5 and TRAF6). The SCF(FBXL2) complex acts as a negative regulator of the NLRP3 inflammasome by mediating ubiquitination and degradation of NLRP3. In Bos taurus (Bovine), this protein is F-box/LRR-repeat protein 2.